We begin with the raw amino-acid sequence, 71 residues long: Small ribosomal subunit protein bS21 (71 aa).

This sequence belongs to the bacterial ribosomal protein bS21 family.

This is Small ribosomal subunit protein bS21 from Buchnera aphidicola subsp. Acyrthosiphon pisum (strain 5A).